We begin with the raw amino-acid sequence, 219 residues long: MNIILLGPPGAGKGTQATNICNKYSIPQISTGDMLRVAVKVGTPLGIEAKKIMDSGGLVSDNIIINLVKERIQHSDCKNGFLFDGFPRTITQAEALRKDSVKINFVIEIQVPDQEIIARMSGRRTHLKSGRTYHITYNQPKVEGIDDITGEKLVQRSDDSENTVRSRLDIYHNQTQPLVNYYQSWMDKDSNAPKYAAAIGIGTLDEVKDRIYNSLISYD.

10–15 (GAGKGT) serves as a coordination point for ATP. The NMP stretch occupies residues 30-59 (STGDMLRVAVKVGTPLGIEAKKIMDSGGLV). Residues T31, R36, 57–59 (GLV), 85–88 (GFPR), and Q92 each bind AMP. An LID region spans residues 122 to 159 (GRRTHLKSGRTYHITYNQPKVEGIDDITGEKLVQRSDD). Residues R123 and 132–133 (TY) each bind ATP. Positions 156 and 167 each coordinate AMP. ATP is bound at residue G202.

It belongs to the adenylate kinase family. In terms of assembly, monomer.

The protein resides in the cytoplasm. It carries out the reaction AMP + ATP = 2 ADP. It participates in purine metabolism; AMP biosynthesis via salvage pathway; AMP from ADP: step 1/1. In terms of biological role, catalyzes the reversible transfer of the terminal phosphate group between ATP and AMP. Plays an important role in cellular energy homeostasis and in adenine nucleotide metabolism. This Vesicomyosocius okutanii subsp. Calyptogena okutanii (strain HA) protein is Adenylate kinase.